The chain runs to 88 residues: Synaptonemal complex central element protein 3 (88 aa).

The stretch at 8–75 (ERSYDNMLKM…FLNCKEEMEK (68 aa)) forms a coiled coil.

As to quaternary structure, homodimer. Can form higher-order homooligomers. Interacts with SYCP1 (via tetrameric core); the interaction remodels SYCP1 homotetramers to 2:1 heterotrimers with SYCE3. SYCP1/SYCE3 heterotrimers form lattice assemblies as part of the mature synaptonemal complex via both lateral and head-to-head interactions. Interacts with the SYCE1-SIX6OS1 complex; the interaction recruits the SYCE1-SIX6OS1 complex to the central element of the synaptonemal complex. Interacts with the SYCE2-TEX12 complex; the interaction promotes fibrous assembly of SYCE2-TEX12 as part of the synaptonemal complex central element. Interacts with SYCE1. Interacts with SYCE2. Interacts with proteasome subunit PSMA8; to participate in meiosis progression during spermatogenesis. Interacts with SPO16. Expression is restricted to spermatocytes and is absent in spermatogonia, spermatids and spermatogonia (at protein level). Expressed in adult testis and embryonic ovary. Expressed in the convoluted seminiferous tubules in spermatogonia and spermatocytes.

It is found in the nucleus. Its subcellular location is the chromosome. Major component of the transverse central element of synaptonemal complexes (SCS), formed between homologous chromosomes during meiotic prophase. Required for the assembly of the central element of the synaptonemal complex during meiosis, via remodeling of SYCP1 lattice structures and promoting recruitment of SYCE2-TEX12 and SYCE1-SIX60S1 complexes. Required for chromosome loading of the central element-specific SCS proteins, and for initiating synapsis between homologous chromosomes. Chromosome loading appears to require SYCP1. Required for fertility and normal testis development. May play a role in apoptosis of spermatogenic cells and pathogenesis of cryptorchidism. The sequence is that of Synaptonemal complex central element protein 3 from Mus musculus (Mouse).